The following is a 143-amino-acid chain: UPF0299 membrane protein CGSHiEE_04225 (143 aa).

4 consecutive transmembrane segments (helical) span residues 1 to 21 (MIQKLFLLVRSLVILSIMLSL), 33 to 52 (VPGSIWGLLLLFLGLTTRVI), 60 to 80 (GASLLIRFMAVLFVPVSVGII), and 92 to 112 (ILLVPNIVSTCVTLLVIGFLG).

The protein belongs to the UPF0299 family.

The protein localises to the cell inner membrane. This chain is UPF0299 membrane protein CGSHiEE_04225, found in Haemophilus influenzae (strain PittEE).